A 118-amino-acid polypeptide reads, in one-letter code: Holo-[acyl-carrier-protein] synthase (118 aa).

Residues Asp-8 and Glu-58 each coordinate Mg(2+).

This sequence belongs to the P-Pant transferase superfamily. AcpS family. Mg(2+) is required as a cofactor.

It localises to the cytoplasm. It catalyses the reaction apo-[ACP] + CoA = holo-[ACP] + adenosine 3',5'-bisphosphate + H(+). Functionally, transfers the 4'-phosphopantetheine moiety from coenzyme A to a Ser of acyl-carrier-protein. The chain is Holo-[acyl-carrier-protein] synthase from Streptococcus pyogenes serotype M12 (strain MGAS2096).